Reading from the N-terminus, the 122-residue chain is Large ribosomal subunit protein uL18 (122 aa).

This sequence belongs to the universal ribosomal protein uL18 family. As to quaternary structure, part of the 50S ribosomal subunit; part of the 5S rRNA/L5/L18/L25 subcomplex. Contacts the 5S and 23S rRNAs.

This is one of the proteins that bind and probably mediate the attachment of the 5S RNA into the large ribosomal subunit, where it forms part of the central protuberance. In Lachnoclostridium phytofermentans (strain ATCC 700394 / DSM 18823 / ISDg) (Clostridium phytofermentans), this protein is Large ribosomal subunit protein uL18.